A 615-amino-acid chain; its full sequence is MTHILGISAYYHDSAAALVKDGVIVAAVQEERFTRKKHDASFPTQGINYCLGEAGISLKEVDYIVFYEKPLVTFERLLETYLAFAPRGLRSFIAAMSAWLQEKLYLKTVLKKALAELGDCKTKDLPPLLFNEHHQSHAASAFFPSPFDEAAVLCMDGVGEWATTSLWSGQGNQLTPHWEIHFPHSLGLLYSAFTYYTGFKVNSGEYKLMGLAPYGEPKYVDLILDNLLDLKADGTFRLNMAYFNYATGLTMTNKKFADLFGAPRRSPESPLTQREMDIAASIQVVTEKVVLRLGNTVYEELGLENLCLAGGVALNCVANGRLLREGKFKNIWIQPAAGDAGGAIGAALSVWHQYLQNERMVRKPDAMAGSYLGPRFTNEEIETYLKGPAVQAVYDYYSDEDLFGKVAHILAGGNVVGWFQGRMEFGPRALGGRSIIGDPRNTTMQSVMNLKIKYRESFRPFAPSVLAEKVGDYFELDQPSPYMLIVADVREELRLPLTPEQEQLFGIEKLNIPRSQLPAITHVDNSARIQTVHPETNPRYYQLLRQFEALTDCGVLVNTSFNVRGEPIVCTPEDAYRCFMRTEMDYLVLENFVLAKTAQPQREQDQKWQEEFELD.

Belongs to the NodU/CmcH family.

This is an uncharacterized protein from Synechocystis sp. (strain ATCC 27184 / PCC 6803 / Kazusa).